The primary structure comprises 251 residues: MAYIKIALLAAIAALASAQTQEEIDELNVILNDVKSNLQEYISLAEDSSSGFSLSSLPSGVLDIGLALASATDDSYTTLYSEVDFAAVSKMLTMVPWYSSRLLPELESLLGTSTTAASSTEASSAATSSAVASSSETTSSAVASSSEATSSAVASSSEASSSAATSSAVASSSEATSSTVASSTKAASSTKASSSAVSSAVASSTKASAISQISDGQVQATSTVSEQTENGAAKAVIGMGAGVMAAAAMLL.

An N-terminal signal peptide occupies residues 1–18 (MAYIKIALLAAIAALASA). One copy of the PIR1/2/3 repeat lies at 207–225 (ASAISQISDGQVQATSTVS). G231 is lipidated: GPI-anchor amidated glycine. Positions 232–251 (AAKAVIGMGAGVMAAAAMLL) are cleaved as a propeptide — removed in mature form.

Belongs to the SRP1/TIP1 family. The GPI-anchor is attached to the protein in the endoplasmic reticulum and serves to target the protein to the cell surface. There, the glucosamine-inositol phospholipid moiety is cleaved off and the GPI-modified mannoprotein is covalently attached via its lipidless GPI glycan remnant to the 1,6-beta-glucan of the outer cell wall layer. In terms of processing, covalently linked to beta-1,3-glucan of the inner cell wall layer via an alkali-sensitive ester linkage between the gamma-carboxyl group of glutamic acids, arising from a specific glutamine within the PIR1/2/3 repeat, and hydroxyl groups of glucoses of beta-1,3-glucan chains.

It is found in the secreted. Its subcellular location is the cell wall. It localises to the membrane. Its function is as follows. Component of the cell wall. This chain is Cold shock-induced protein TIR2 (TIR2), found in Saccharomyces cerevisiae (strain ATCC 204508 / S288c) (Baker's yeast).